Reading from the N-terminus, the 108-residue chain is uncharacterized protein (108 aa).

This is an uncharacterized protein from Saccharomyces cerevisiae (strain ATCC 204508 / S288c) (Baker's yeast).